The chain runs to 334 residues: Large ribosomal subunit protein uL3 (334 aa).

Residues 1–10 (MGMKKSRPRR) are compositionally biased toward basic residues. Residues 1-20 (MGMKKSRPRRGSLAFSPRKR) form a disordered region.

The protein belongs to the universal ribosomal protein uL3 family. As to quaternary structure, part of the 50S ribosomal subunit. Forms a cluster with proteins L14 and L24e.

Functionally, one of the primary rRNA binding proteins, it binds directly near the 3'-end of the 23S rRNA, where it nucleates assembly of the 50S subunit. In Methanococcus maripaludis (strain C6 / ATCC BAA-1332), this protein is Large ribosomal subunit protein uL3.